Reading from the N-terminus, the 605-residue chain is Solute carrier family 23 member 1 (605 aa).

The tract at residues 1–30 is disordered; the sequence is MKTPEDPGSPKQHEVVDSAGTSTRDRQAPL. The Cytoplasmic segment spans residues 1-59; that stretch reads MKTPEDPGSPKQHEVVDSAGTSTRDRQAPLPTEPKFDMLYKIEDVPPWYLCILLGFQHY. The helical transmembrane segment at 60–80 threads the bilayer; that stretch reads LTCFSGTIAVPFLLAEALCVG. Residues 81–88 lie on the Extracellular side of the membrane; that stretch reads RDQHMVSQ. A helical membrane pass occupies residues 89 to 109; sequence LIGTIFTCVGITTLIQTTVGI. Residue Arg-110 is a topological domain, cytoplasmic. A helical membrane pass occupies residues 111-131; the sequence is LPLFQASAFAFLVPAKSILAL. At 132–166 the chain is on the extracellular side; it reads ERWKCPSEEEIYGNWSMPLNTSHIWHPRIREVQGA. Asn-145 and Asn-151 each carry an N-linked (GlcNAc...) asparagine glycan. The chain crosses the membrane as a helical span at residues 167–187; sequence IMVSSMVEVVIGLMGLPGALL. At 188-214 the chain is on the cytoplasmic side; it reads SYIGPLTVTPTVSLIGLSVFQAAGDRA. Residues 215-232 form a helical membrane-spanning segment; it reads GSHWGISACSILLIVLFS. Residues 233-236 lie on the Extracellular side of the membrane; sequence QYLR. The segment at residues 237–250 is an intramembrane region (helical); that stretch reads NLTFLLPVYRWGKG. Residues 251 to 257 are Extracellular-facing; that stretch reads LTLFRVQ. Residues 258 to 278 traverse the membrane as a helical segment; sequence IFKMFPIVLAIMTVWLLCYVL. Residues 279-319 are Cytoplasmic-facing; the sequence is TLTDVLPADPTVYGFQARTDARGDIMAISPWIRIPYPCQWG. The chain crosses the membrane as a helical span at residues 320–340; the sequence is LPTVTVAAVLGMFSATLAGII. The Extracellular portion of the chain corresponds to 341–365; sequence ESIGDYYACARLAGAPPPPVHAINR. A helical membrane pass occupies residues 366-386; that stretch reads GIFTEGICCIIAGLLGTGNGS. The Cytoplasmic portion of the chain corresponds to 387 to 409; that stretch reads TSSSPNIGVLGITKVGSRRVVQY. Residues 410 to 430 traverse the membrane as a helical segment; it reads GAGIMLILGAIGKFTALFASL. Residues 431 to 433 lie on the Extracellular side of the membrane; sequence PDP. A helical membrane pass occupies residues 434-454; it reads ILGGMFCTLFGMITAVGLSNL. The Cytoplasmic segment spans residues 455–464; that stretch reads QFVDMNSSRN. A helical transmembrane segment spans residues 465-485; sequence LFVLGFSMFFGLTLPNYLDSN. Residues 486–497 are Extracellular-facing; the sequence is PGAINTGIPEVD. The helical transmembrane segment at 498–518 threads the bilayer; sequence QILTVLLTTEMFVGGCLAFIL. The Cytoplasmic portion of the chain corresponds to 519–605; that stretch reads DNTVPGSPEE…IETGSVCTKV (87 aa). Position 598 is a phosphothreonine (Thr-598). Ser-600 carries the phosphoserine modification. Phosphothreonine is present on Thr-603.

The protein belongs to the nucleobase:cation symporter-2 (NCS2) (TC 2.A.40) family. Phosphorylated. Expressed in kidney (at protein level).

Its subcellular location is the cell membrane. It catalyses the reaction L-ascorbate(out) + 2 Na(+)(out) = L-ascorbate(in) + 2 Na(+)(in). The enzyme catalyses urate(out) + 2 Na(+)(out) = urate(in) + 2 Na(+)(in). Sodium:L-ascorbate cotransporter. Mediates electrogenic uptake of vitamin C, with a stoichiometry of 2 Na(+) for each L-ascorbate. Has retained some ancestral activity toward nucleobases such as urate, an oxidized purine. Low-affinity high-capacity sodium:urate cotransporter, may regulate serum urate levels by serving as a renal urate re-absorber. The chain is Solute carrier family 23 member 1 (Slc23a1) from Mus musculus (Mouse).